Reading from the N-terminus, the 552-residue chain is uncharacterized protein (552 aa).

A disordered region spans residues 1 to 59; the sequence is MPLEKTNTHDSTATVEDQEATDNPMHLTQSRMLDLAGNPNRTTSRQSETLFPNGVDLNY. The span at 39 to 50 shows a compositional bias: polar residues; sequence PNRTTSRQSETL. 12 helical membrane passes run 116–136, 158–178, 181–201, 203–223, 238–258, 271–291, 345–365, 383–403, 424–444, 450–470, 484–506, and 519–539; these read ITIV…VIAG, LMVV…EMIG, IVYL…ALAP, IACL…PLTL, GLAI…GPLV, WIFW…LPVP, ILVC…GYFF, GLMF…TPFL, LVGM…FAWT, IWIG…LFYF, CASA…PLFI, and FFLL…FYLF.

Belongs to the major facilitator superfamily.

It localises to the membrane. This is an uncharacterized protein from Schizosaccharomyces pombe (strain 972 / ATCC 24843) (Fission yeast).